The following is a 130-amino-acid chain: uncharacterized protein (130 aa).

This is an uncharacterized protein from Pyrococcus horikoshii (strain ATCC 700860 / DSM 12428 / JCM 9974 / NBRC 100139 / OT-3).